The primary structure comprises 738 residues: Ethylene receptor (738 aa).

Helical transmembrane passes span 23–43 (ISDFFIALAYFSIPLELIYFV), 54–74 (VLVQFGAFIVLCGATHLINLW), and 89–109 (IAKVLTAVVSCATALMLVHII). C65 and H69 together coordinate Cu cation. The region spanning 158-307 (DRHTILRTTL…VVADQVAVAL (150 aa)) is the GAF domain. Residues 350 to 589 (VMNHEMRTPM…IFIVKLGIPE (240 aa)) enclose the Histidine kinase domain. H353 is subject to Phosphohistidine; by autocatalysis. The 116-residue stretch at 615-730 (KVLLMDDNGV…KMRSVLSDLL (116 aa)) folds into the Response regulatory domain. The residue at position 663 (D663) is a 4-aspartylphosphate.

The protein belongs to the ethylene receptor family. Homodimer; disulfide-linked. Requires Cu cation as cofactor. Activation probably requires a transfer of a phosphate group between a His in the transmitter domain and an Asp of the receiver domain. As to expression, higher expression in arils than in seeds.

The protein resides in the endoplasmic reticulum membrane. The catalysed reaction is ATP + protein L-histidine = ADP + protein N-phospho-L-histidine.. Functionally, may act early in the ethylene signal transduction pathway, possibly as an ethylene receptor, or as a regulator of the pathway. The chain is Ethylene receptor (ETR1) from Passiflora edulis (Passion fruit).